The sequence spans 969 residues: MGEQSHEKDHDEAHSYNPFVRSAVEYDADTRLQMAENAASARKLFVSSALKDIIVNPENFYHDFQQSAQMAEDANQRRQVSYNTKREAHIHQLKAQGLPLPSNIPMIEINPTRVTLNMEFESQYYSLMTSDNGDHENVASIMAETNTLIQLPDRSVGGTTPDPFAQQVTITGYFGDVDRARMLMRRNCHFTVFMALSKMKMPLHELQAHVRQNPIQNVEMSFVDAPEKNGIVTTYLRITAREKNQHELIEAAKRLNEILFRESPAPENNFTLHFTLSTYYVDQVLGSSSTAQLMPVIERETTTIISYPCYNNRNETRGNIYEIKVVGNIDNVLKARRYIMDLLPISMCFNIKNTDMAEPSRVSDRNIHMIIDESGIILKMTPSVYEPADLLSGEVPLNCASLRSKEFNIKKLYTAYQKVLSKKFDFIAPQPNDYDNSIWHHSLPANFLKNFNMPCRGELSDGSNGRRHRSSSIASSRSKHSYMSKGKQFSESSGGPSRSHTRVSSFSENSSTVPIMQFPTPHFAPPMLTPHHHMLKYVYLQQHQQAQTFLKGAAGLHPGTHIMFPPPIIVDGSFVSALPFADPVVFDGFPYVHGLFPVNEAEQHRNHRESSPSLRSTQEIRKPSRNMGNRPSSSTGSYYPSTTPRQRVYEQVREDDLRSHIGSRRTSVNGDDQNVESMHDQGYERQYPRQHQRLQKDDQQRWKTGSRGDIHSSRTINVHRDVRNSNEYDFHVGNSGPAKRSPSLEQVQLQMTHHLKLKSNDVDLDHEKLYMHESPHNDSDTTVSASGFGNDLMDGDFVQRFLSNANINESGRRPRTVSCFTEKDGQSARYIDSDGAYSVVDHASTHQSRSYDSFRKVGDNGVTKTILEPRARVEKDYGKISLEHKTKYSNEYGDEEKSAENDTSSLGSRQYRIDPMKLIASVRESSEQLPRIHERQFSDVLNEKEKEIADKSIESTVTQDLSLDETSTY.

A gld-2-binding region spans residues Met34 to Ser81. KH domains lie at Met34–Ile109, Arg113–Asn187, His189–Leu259, Phe270–Leu342, and Pro344–Val419. Residues Pro57 to Ser471 form a gls-1-binding region. Disordered stretches follow at residues Leu459 to Glu508 and Glu602 to His711. Over residues Lys487 to Glu508 the composition is skewed to polar residues. A compositionally biased stretch (low complexity) spans Pro631–Pro644. The span at Arg647–Ser659 shows a compositional bias: basic and acidic residues. Positions Arg664–Glu676 are enriched in polar residues. 2 stretches are compositionally biased toward basic and acidic residues: residues Ser677 to Tyr687 and Leu694 to His711. Residues Leu769 to Tyr969 form a gls-1-binding region. Positions Asn860 to Ala949 are fbf-1-binding. Residues Asp950–Tyr969 form a disordered region. Polar residues predominate over residues Glu954–Tyr969.

In terms of assembly, interacts (via its KH1 domain) with gld-2. Isoform A but not isoform B interacts specifically with fbf-1 and fbf-2 in an RNA-independent manner. Isoform A interacts with gls-1 isoform C. In terms of tissue distribution, expressed in the germline (at protein level). In adult hermaphrodites, first detected in the transition zone (TZ), weakly expressed in the early mitotic region and in pachytene germ cells, and becomes more abundantly expressed as germ cells enter diakinesis (at protein level). Expressed in primary spermatocytes, but not in secondary spermatocytes or adult sperm (at protein level).

It is found in the cytoplasm. Its subcellular location is the cytoplasmic granule. The protein resides in the perinuclear region. In terms of biological role, required maternally for germline survival and embryogenesis. Forms a complex with gls-1 which promotes the oogenic cell fate by freeing the translational repressor fbf to repress sperm promoting factors. Promotes maturation of primary spermatocytes to mature sperm. Required during hermaphrodite development to promote sperm fate, which is critical for determining the normal number of sperm. Promotion of sperm fate is at the expense of oogenesis, possibly through the negative regulation of fbf. Required during male development for the continued production of sperm and inhibition of oogenesis. Together with gld-2, promotes the transition from mitosis to meiosis. Required for polyadenylation of neg-1 mRNA during embryogenesis. This Caenorhabditis elegans protein is Defective in germ line development protein 3.